A 236-amino-acid chain; its full sequence is Probable transmembrane ascorbate ferrireductase 4 (236 aa).

Residues 14–210 enclose the Cytochrome b561 domain; the sequence is FARLSGLVVA…LGCIVITAAI (197 aa). A run of 3 helical transmembrane segments spans residues 17–37, 42–62, and 76–96; these read LSGL…PNLG, TLHP…AILI, and VHLW…WTKF. Positions 44, 77, and 110 each coordinate heme b. 3 helical membrane passes run 112–132, 144–164, and 191–211; these read WMGL…FMSF, TFLP…IATA, and VNGL…AAIL. Residue His-149 coordinates heme b.

Homodimer. Requires heme b as cofactor.

The protein resides in the membrane. The catalysed reaction is Fe(3+)(out) + L-ascorbate(in) = monodehydro-L-ascorbate radical(in) + Fe(2+)(out) + H(+). Functionally, two-heme-containing cytochrome. May catalyze ascorbate-dependent trans-membrane ferric-chelate reduction. This Arabidopsis thaliana (Mouse-ear cress) protein is Probable transmembrane ascorbate ferrireductase 4 (CYB561D).